The following is a 552-amino-acid chain: MRQSWRPELLIVGAVVVIEGLQAAQRACGQRGPGPPEPQEGNTLPGEWPWQASVRRQGVHICSGSLVADTWVLTAAHCFEKMATAELSSWSVVLGSLKQEGQSPGAEEVGVAALQLPKAYNHYSQGSDLALLQLTHPTVQTTLCLPQPTYHFPFGASCWATGWDQNTSDVSRTLRNLRLRLISRPTCNCLYNRLHQRLLSNPARPGMLCGGAQPGEQGPCQGDSGGPVMCREPDGHWVQVGIISFTSKCAQEDTPVLLTDMAVHSSWLQAHVHEAAFLVQAPGVVKMSDENSCVACGSLRSAGPQAGALSQWPWDARLKHHGKLACGGALVSEVVVLTAAHCFIGRQTLEEWSVGLGAGPEEWGLKQLILHGAYTHPEGGYDVAFLLLAQPVTLGPGLRPLCLPYADHHLPDGEHGWVLGLTQKAGINYPQTVPVTVLGPMACSRQHAAPGGTGIPILPGMVCTTVVGEPPHCEGLSGAPLVHEIRGTWFLVGLHSFGDTCQSSAKPAVFAALSAYEDWISNLDWQVYFAEEPEPEAETGSCLVNSSQPASC.

Positions 1–23 (MRQSWRPELLIVGAVVVIEGLQA) are cleaved as a signal peptide. Peptidase S1 domains lie at 24 to 273 (AQRA…AHVH) and 294 to 525 (VACG…NLDW). The tract at residues 27–46 (ACGQRGPGPPEPQEGNTLPG) is disordered. Residues C62 and C78 are joined by a disulfide bond. Active-site charge relay system residues include H77 and D128. Disulfide bonds link C158-C230, C187-C209, C220-C249, and C326-C342. Active-site charge relay system residues include S224, H341, and D382. Intrachain disulfides connect C443–C463 and C473–C501. S477 acts as the Charge relay system in catalysis.

The protein belongs to the peptidase S1 family.

Its subcellular location is the secreted. In vitro can degrade the fibrinogen alpha chain of as well as pro-urokinase-type plasminogen activator. In Mus musculus (Mouse), this protein is Serine protease 53 (Prss53).